The sequence spans 938 residues: Isoleucine--tRNA ligase (938 aa).

Positions 58–68 match the 'HIGH' region motif; the sequence is PYANGNIHMGH. Glutamate 566 is a binding site for L-isoleucyl-5'-AMP. Positions 607 to 611 match the 'KMSKS' region motif; sequence KMSKS. Lysine 610 contributes to the ATP binding site. Zn(2+) contacts are provided by cysteine 906, cysteine 909, cysteine 926, and cysteine 929.

The protein belongs to the class-I aminoacyl-tRNA synthetase family. IleS type 1 subfamily. As to quaternary structure, monomer. Zn(2+) serves as cofactor.

The protein resides in the cytoplasm. The enzyme catalyses tRNA(Ile) + L-isoleucine + ATP = L-isoleucyl-tRNA(Ile) + AMP + diphosphate. Catalyzes the attachment of isoleucine to tRNA(Ile). As IleRS can inadvertently accommodate and process structurally similar amino acids such as valine, to avoid such errors it has two additional distinct tRNA(Ile)-dependent editing activities. One activity is designated as 'pretransfer' editing and involves the hydrolysis of activated Val-AMP. The other activity is designated 'posttransfer' editing and involves deacylation of mischarged Val-tRNA(Ile). In Nitratidesulfovibrio vulgaris (strain DP4) (Desulfovibrio vulgaris), this protein is Isoleucine--tRNA ligase.